The following is a 1065-amino-acid chain: Exportin-T (1065 aa).

This sequence belongs to the exportin family.

The protein localises to the nucleus. The protein resides in the cytoplasm. Its function is as follows. tRNA nucleus export receptor which facilitates tRNA translocation across the nuclear pore complex. Involved in pre-tRNA splicing, probably by affecting the interaction of pre-tRNA with splicing endonuclease. The sequence is that of Exportin-T (LOS1) from Coprinopsis cinerea (strain Okayama-7 / 130 / ATCC MYA-4618 / FGSC 9003) (Inky cap fungus).